Reading from the N-terminus, the 795-residue chain is Protocadherin beta-4 (795 aa).

A signal peptide spans 1-27 (MKKLGRIHPNRQVLAFILMVFLSQVRL). The Extracellular portion of the chain corresponds to 28 to 689 (EPIRYSVLEE…SQADSLTVYL (662 aa)). 5 consecutive Cadherin domains span residues 34–132 (VLEE…SPVF), 137–241 (VLLK…APEF), 246–346 (YGVQ…PPEL), 351–450 (LTSS…APAF), and 455–560 (YTLF…SPFV). An N-linked (GlcNAc...) asparagine glycan is attached at N183. A glycan (N-linked (GlcNAc...) asparagine) is linked at N417. N566 carries an N-linked (GlcNAc...) asparagine glycan. In terms of domain architecture, Cadherin 6 spans 567–670 (GSAPCTELVP…LVDGFSQPYL (104 aa)). The helical transmembrane segment at 690-710 (VVALASVSSLFLFSVLLFVAV) threads the bilayer. The Cytoplasmic segment spans residues 711–795 (RLCRRSRAAS…PKFRNSLVFS (85 aa)).

Its subcellular location is the cell membrane. Potential calcium-dependent cell-adhesion protein. May be involved in the establishment and maintenance of specific neuronal connections in the brain. The polypeptide is Protocadherin beta-4 (PCDHB4) (Pan troglodytes (Chimpanzee)).